The chain runs to 158 residues: Protein Smg homolog (158 aa).

This sequence belongs to the Smg family.

This chain is Protein Smg homolog, found in Vibrio cholerae serotype O1 (strain ATCC 39315 / El Tor Inaba N16961).